The following is a 732-amino-acid chain: Catalase-peroxidase (732 aa).

Positions 97-220 (WHSAGTYRTS…LAAVQMGLIY (124 aa)) form a cross-link, tryptophyl-tyrosyl-methioninium (Trp-Tyr) (with M-246). His98 serves as the catalytic Proton acceptor. The segment at residues 220–246 (YVNPEGPDGNPDPVAAGRDIRETFARM) is a cross-link (tryptophyl-tyrosyl-methioninium (Tyr-Met) (with W-97)). His261 lines the heme b pocket.

This sequence belongs to the peroxidase family. Peroxidase/catalase subfamily. Homodimer or homotetramer. Heme b serves as cofactor. Post-translationally, formation of the three residue Trp-Tyr-Met cross-link is important for the catalase, but not the peroxidase activity of the enzyme.

The catalysed reaction is H2O2 + AH2 = A + 2 H2O. It carries out the reaction 2 H2O2 = O2 + 2 H2O. Bifunctional enzyme with both catalase and broad-spectrum peroxidase activity. In Chlorobium phaeobacteroides (strain DSM 266 / SMG 266 / 2430), this protein is Catalase-peroxidase.